Consider the following 359-residue polypeptide: Insulin gene enhancer protein ISL-2 (359 aa).

2 consecutive LIM zinc-binding domains span residues 25 to 86 (AMCV…RLFG) and 87 to 149 (IKCA…LLER). Residues 151–190 (AAGSPRSPGPLPGARGLHLPDAGSGRQPSLRTHVHKQAEK) form a disordered region. Phosphoserine is present on residues serine 154 and serine 157. Positions 191 to 250 (TTRVRTVLNEKQLHTLRTCYAANPRPDALMKEQLVEMTGLSPRVIRVWFQNKRCKDKKKS) form a DNA-binding region, homeobox. Residues 272 to 301 (GTPLVAGSPIRHENAVQGSAVEVQTYQPPW) form an LIM-binding domain (LID) region. Residue serine 279 is modified to Phosphoserine. The segment covering 326-336 (ESGSLGNSSGS) has biased composition (low complexity). Residues 326–359 (ESGSLGNSSGSDVTSLSSQLPDTPNSMVPSPVET) form a disordered region. Over residues 337–359 (DVTSLSSQLPDTPNSMVPSPVET) the composition is skewed to polar residues.

Interacts with LHX4.

The protein resides in the nucleus. Its function is as follows. Transcriptional factor that defines subclasses of motoneurons that segregate into columns in the spinal cord and select distinct axon pathways. The polypeptide is Insulin gene enhancer protein ISL-2 (Isl2) (Mus musculus (Mouse)).